A 601-amino-acid chain; its full sequence is Probable HECT-type ubiquitin ligase-interacting protein creD (601 aa).

Disordered regions lie at residues 374 to 397 (EVDP…GTLS) and 455 to 489 (SADY…DHDH). Positions 461-473 (PSSGSNSHSPASP) are enriched in low complexity. Basic and acidic residues predominate over residues 475–489 (LSRRPSDEGYHDHDH).

Belongs to the arrestin family. As to quaternary structure, interacts with hulA.

Component of the regulatory network controlling carbon source utilization through ubiquitination and deubiquitination involving creA, creB, creC, creD and acrB. May be involved in signaling by recognizing appropriately phosphorylated substrates via its arrestin domains and then recruit a HECT-type ubiquitin ligase such as hulA, leading to ubiquitination of the substrate, providing a link between ubiquitination and phosphorylation in protein regulation and stability. The sequence is that of Probable HECT-type ubiquitin ligase-interacting protein creD (creD) from Neosartorya fischeri (strain ATCC 1020 / DSM 3700 / CBS 544.65 / FGSC A1164 / JCM 1740 / NRRL 181 / WB 181) (Aspergillus fischerianus).